A 396-amino-acid polypeptide reads, in one-letter code: Na(+)/H(+) antiporter NhaA (396 aa).

11 consecutive transmembrane segments (helical) span residues 16-36 (GIILIMAAMLAMILANSGLAG), 59-79 (LLLWINDGFMAVFFLLVGLEV), 95-115 (TFPAIAAVGGMLAPALIYAFF), 124-144 (AGWAIPAATDIAFALGVMALL), 154-174 (VFLLALAIMDDLGVIIIIALF), 178-198 (QLSLTALAIGILATLTLLWMN), 213-233 (LVLWVAVLKSGVHATLAGVIV), 254-274 (ALHPWSAYLILPLFAFANAGV), 278-298 (GIGLSALLSPVPLGIMLGLFI), 328-348 (IFAVSILCGIGFTMSMFIASL), and 363-383 (LGILVGSTLAAIVGYLALRIA).

Belongs to the NhaA Na(+)/H(+) (TC 2.A.33) antiporter family.

The protein resides in the cell inner membrane. It carries out the reaction Na(+)(in) + 2 H(+)(out) = Na(+)(out) + 2 H(+)(in). Na(+)/H(+) antiporter that extrudes sodium in exchange for external protons. The protein is Na(+)/H(+) antiporter NhaA of Aeromonas hydrophila subsp. hydrophila (strain ATCC 7966 / DSM 30187 / BCRC 13018 / CCUG 14551 / JCM 1027 / KCTC 2358 / NCIMB 9240 / NCTC 8049).